Here is a 1040-residue protein sequence, read N- to C-terminus: Activated CDC42 kinase 1 (1040 aa).

Positions 1-110 are SAM-like domain; the sequence is MQPEEGTGWL…PSPTPGGLAG (110 aa). Residues 86-109 are disordered; that stretch reads EAEFPSHHSQSTFRKPSPTPGGLA. At T113 the chain carries Phosphothreonine. The region spanning 126-385 is the Protein kinase domain; the sequence is LRLLEKLGDG…PTFVALRDFL (260 aa). ATP-binding positions include 132–140 and K158; that span reads LGDGSFGVV. D252 serves as the catalytic Proton acceptor. Y284 carries the phosphotyrosine; by SRC and autocatalysis modification. The 61-residue stretch at 388–448 folds into the SH3 domain; sequence AQPTDMRALQ…PRNVVTSVAG (61 aa). The tract at residues 505–527 is disordered; that stretch reads RPTQHLGRMKKPTYDPVSEDPDP. Phosphotyrosine is present on Y518. The required for interaction with SRC stretch occupies residues 623–652; sequence DWDARPLPPPPAYDDVAQDEDDFEVCSINS. Residues 632–635 form a required for interaction with NEDD4 region; sequence PPAY. Residues 722 to 824 are disordered; it reads TGQLTPSPTP…MPTTQSFASD (103 aa). The EBD domain stretch occupies residues 733 to 876; it reads GDDKPQVPPR…PYLERYQRFL (144 aa). 2 stretches are compositionally biased toward pro residues: residues 738-749 and 772-783; these read QVPPRVPIPPRP and PSSPPRVPPREP. Positions 802 to 812 are enriched in low complexity; sequence PLPHRLSSSPG. Position 827 is a phosphotyrosine (Y827). R839 is subject to Omega-N-methylarginine. A phosphotyrosine mark is found at Y859 and Y872. S881 is modified (phosphoserine). The interval 881–957 is disordered; it reads SPEEPAALPV…CPGDGQEAAR (77 aa). Pro residues predominate over residues 888 to 903; that stretch reads LPVPPLLPPPSTPAPA. The segment covering 922-931 has biased composition (polar residues); that stretch reads NFSTNNSNPG. One can recognise a UBA domain in the interval 958 to 998; it reads PADKVQMLQAMVHGVTTEECQAALRSHSWSIQRAAQYLKVE.

This sequence belongs to the protein kinase superfamily. Tyr protein kinase family. Homodimer. Interacts with CDC42. Interacts with CSPG4 (activated). Interacts with MERTK (activated); stimulates autophosphorylation. May interact (phosphorylated) with HSP90AB1; maintains kinase activity. Interacts with NPHP1. Interacts with SNX9 (via SH3 domain). Interacts with SRC (via SH2 and SH3 domain). Interacts with EGFR, and this interaction is dependent on EGF stimulation and kinase activity of EGFR. Interacts (via kinase domain) with AKT1. Part of a collagen stimulated complex involved in cell migration composed of CDC42, CRK, TNK2 and BCAR1/p130cas. Interacts with BCAR1/p130cas via SH3 domains. Forms complexes with GRB2 and numerous receptor tyrosine kinases (RTK) including LTK, AXL or PDGFRL, in which GRB2 promotes RTK recruitment by TNK2. Interacts with NEDD4 (via WW3 domain). NEDD4L and EGF promote association with NEDD4. Mg(2+) is required as a cofactor. Post-translationally, autophosphorylation regulates kinase activity. Phosphorylation on Tyr-518 is required for interaction with SRC and is observed during association with clathrin-coated pits. In terms of processing, polyubiquitinated by NEDD4 and NEDD4L. Degradation can be induced by EGF and is lysosome-dependent.

Its subcellular location is the cell membrane. It is found in the nucleus. It localises to the endosome. The protein resides in the cell junction. The protein localises to the adherens junction. Its subcellular location is the cytoplasmic vesicle membrane. It is found in the cytoplasmic vesicle. It localises to the clathrin-coated vesicle. The protein resides in the membrane. The protein localises to the clathrin-coated pit. Its subcellular location is the cytoplasm. It is found in the cytosol. The catalysed reaction is L-tyrosyl-[protein] + ATP = O-phospho-L-tyrosyl-[protein] + ADP + H(+). It carries out the reaction L-seryl-[protein] + ATP = O-phospho-L-seryl-[protein] + ADP + H(+). The enzyme catalyses L-threonyl-[protein] + ATP = O-phospho-L-threonyl-[protein] + ADP + H(+). Functionally, non-receptor tyrosine-protein and serine/threonine-protein kinase that is implicated in cell spreading and migration, cell survival, cell growth and proliferation. Transduces extracellular signals to cytosolic and nuclear effectors. Phosphorylates AKT1, AR, MCF2, WASL and WWOX. Implicated in trafficking and clathrin-mediated endocytosis through binding to epidermal growth factor receptor (EGFR) and clathrin. Binds to both poly- and mono-ubiquitin and regulates ligand-induced degradation of EGFR, thereby contributing to the accumulation of EGFR at the limiting membrane of early endosomes. Downstream effector of CDC42 which mediates CDC42-dependent cell migration via phosphorylation of BCAR1. May be involved both in adult synaptic function and plasticity and in brain development. Activates AKT1 by phosphorylating it on 'Tyr-176'. Phosphorylates AR on 'Tyr-267' and 'Tyr-363', thereby promoting its recruitment to androgen-responsive enhancers (AREs). Phosphorylates WWOX on 'Tyr-287'. Phosphorylates MCF2, thereby enhancing its activity as a guanine nucleotide exchange factor (GEF) toward Rho family proteins. Contributes to the control of AXL receptor levels. Confers metastatic properties on cancer cells and promotes tumor growth by negatively regulating tumor suppressor such as WWOX and positively regulating pro-survival factors such as AKT1 and AR. In Rattus norvegicus (Rat), this protein is Activated CDC42 kinase 1.